Here is a 436-residue protein sequence, read N- to C-terminus: Serine--tRNA ligase (436 aa).

239–241 contacts L-serine; the sequence is TAE. 270–272 provides a ligand contact to ATP; the sequence is RLE. Residue glutamate 293 coordinates L-serine. 357–360 is an ATP binding site; sequence EISS. Serine 393 is a binding site for L-serine.

The protein belongs to the class-II aminoacyl-tRNA synthetase family. Type-1 seryl-tRNA synthetase subfamily. Homodimer. The tRNA molecule binds across the dimer.

It localises to the cytoplasm. It catalyses the reaction tRNA(Ser) + L-serine + ATP = L-seryl-tRNA(Ser) + AMP + diphosphate + H(+). It carries out the reaction tRNA(Sec) + L-serine + ATP = L-seryl-tRNA(Sec) + AMP + diphosphate + H(+). It participates in aminoacyl-tRNA biosynthesis; selenocysteinyl-tRNA(Sec) biosynthesis; L-seryl-tRNA(Sec) from L-serine and tRNA(Sec): step 1/1. Catalyzes the attachment of serine to tRNA(Ser). Is also able to aminoacylate tRNA(Sec) with serine, to form the misacylated tRNA L-seryl-tRNA(Sec), which will be further converted into selenocysteinyl-tRNA(Sec). This Blochmanniella floridana protein is Serine--tRNA ligase.